Reading from the N-terminus, the 189-residue chain is Threonylcarbamoyl-AMP synthase (189 aa).

The YrdC-like domain occupies 6–189 (SPAFESVLTA…ALTGELYRQG (184 aa)).

Belongs to the SUA5 family. TsaC subfamily.

It localises to the cytoplasm. It catalyses the reaction L-threonine + hydrogencarbonate + ATP = L-threonylcarbamoyladenylate + diphosphate + H2O. Its function is as follows. Required for the formation of a threonylcarbamoyl group on adenosine at position 37 (t(6)A37) in tRNAs that read codons beginning with adenine. Catalyzes the conversion of L-threonine, HCO(3)(-)/CO(2) and ATP to give threonylcarbamoyl-AMP (TC-AMP) as the acyladenylate intermediate, with the release of diphosphate. This Photorhabdus laumondii subsp. laumondii (strain DSM 15139 / CIP 105565 / TT01) (Photorhabdus luminescens subsp. laumondii) protein is Threonylcarbamoyl-AMP synthase.